We begin with the raw amino-acid sequence, 267 residues long: NAD kinase (267 aa).

The Proton acceptor role is filled by Asp52. NAD(+) is bound by residues 52 to 53 (DG), Arg57, 121 to 122 (NE), Arg132, Lys150, Asp152, 163 to 168 (TAYSLS), and Ala187.

This sequence belongs to the NAD kinase family. The cofactor is a divalent metal cation.

It is found in the cytoplasm. The enzyme catalyses NAD(+) + ATP = ADP + NADP(+) + H(+). Its function is as follows. Involved in the regulation of the intracellular balance of NAD and NADP, and is a key enzyme in the biosynthesis of NADP. Catalyzes specifically the phosphorylation on 2'-hydroxyl of the adenosine moiety of NAD to yield NADP. The polypeptide is NAD kinase (Fusobacterium nucleatum subsp. nucleatum (strain ATCC 25586 / DSM 15643 / BCRC 10681 / CIP 101130 / JCM 8532 / KCTC 2640 / LMG 13131 / VPI 4355)).